A 134-amino-acid chain; its full sequence is Large ribosomal subunit protein uL22 (134 aa).

This sequence belongs to the universal ribosomal protein uL22 family. In terms of assembly, part of the 50S ribosomal subunit. Contacts protein L32.

Functionally, this protein binds specifically to 23S rRNA; its binding is stimulated by other ribosomal proteins, e.g. L4, L17, and L20. It is important during the early stages of 50S assembly. It makes multiple contacts with different domains of the 23S rRNA in the assembled 50S subunit and ribosome. Its function is as follows. The globular domain of the protein is located by the polypeptide exit tunnel on the outside of the subunit while an extended beta-hairpin forms part of the wall of the tunnel. Forms a pair of 'tweezers' with L32 that hold together two different domains of the 23S rRNA. Interacts with the tunnel-blocking modified macrolide azithromycin. Upon binding of the macrolide troleadomycin to the ribosome, the tip of the beta-hairpin is displaced, which severely restricts the tunnel. This and experiments in E.coli have led to the suggestion that it is part of the gating mechanism involved in translation arrest in the absence of the protein export system. This Deinococcus radiodurans (strain ATCC 13939 / DSM 20539 / JCM 16871 / CCUG 27074 / LMG 4051 / NBRC 15346 / NCIMB 9279 / VKM B-1422 / R1) protein is Large ribosomal subunit protein uL22 (rplV).